We begin with the raw amino-acid sequence, 312 residues long: Tyrosine recombinase XerC (312 aa).

A Core-binding (CB) domain is found at 1-103 (MISAFYAFLD…AIKSFSQYCI (103 aa)). The Tyr recombinase domain maps to 124–306 (ELPSPITYEQ…SMKLKKQTHE (183 aa)). Active-site residues include Arg164, Lys188, His258, Arg261, and His284. The active-site O-(3'-phospho-DNA)-tyrosine intermediate is Tyr293.

The protein belongs to the 'phage' integrase family. XerC subfamily. Forms a cyclic heterotetrameric complex composed of two molecules of XerC and two molecules of XerD.

Its subcellular location is the cytoplasm. Site-specific tyrosine recombinase, which acts by catalyzing the cutting and rejoining of the recombining DNA molecules. The XerC-XerD complex is essential to convert dimers of the bacterial chromosome into monomers to permit their segregation at cell division. It also contributes to the segregational stability of plasmids. The protein is Tyrosine recombinase XerC of Chlamydia caviae (strain ATCC VR-813 / DSM 19441 / 03DC25 / GPIC) (Chlamydophila caviae).